A 70-amino-acid chain; its full sequence is ATP synthase subunit c (70 aa).

Transmembrane regions (helical) follow at residues 4–24 (IATAIIIGLGALGAGIGNGLI) and 47–67 (FIGIGLVEALPIIGVAVGFLL).

Belongs to the ATPase C chain family. In terms of assembly, F-type ATPases have 2 components, F(1) - the catalytic core - and F(0) - the membrane proton channel. F(1) has five subunits: alpha(3), beta(3), gamma(1), delta(1), epsilon(1). F(0) has three main subunits: a(1), b(2) and c(10-14). The alpha and beta chains form an alternating ring which encloses part of the gamma chain. F(1) is attached to F(0) by a central stalk formed by the gamma and epsilon chains, while a peripheral stalk is formed by the delta and b chains.

The protein resides in the cell membrane. In terms of biological role, f(1)F(0) ATP synthase produces ATP from ADP in the presence of a proton or sodium gradient. F-type ATPases consist of two structural domains, F(1) containing the extramembraneous catalytic core and F(0) containing the membrane proton channel, linked together by a central stalk and a peripheral stalk. During catalysis, ATP synthesis in the catalytic domain of F(1) is coupled via a rotary mechanism of the central stalk subunits to proton translocation. Functionally, key component of the F(0) channel; it plays a direct role in translocation across the membrane. A homomeric c-ring of between 10-14 subunits forms the central stalk rotor element with the F(1) delta and epsilon subunits. In Exiguobacterium sibiricum (strain DSM 17290 / CCUG 55495 / CIP 109462 / JCM 13490 / 255-15), this protein is ATP synthase subunit c.